Reading from the N-terminus, the 192-residue chain is Putative 3-methyladenine DNA glycosylase (192 aa).

It belongs to the DNA glycosylase MPG family.

The chain is Putative 3-methyladenine DNA glycosylase from Bdellovibrio bacteriovorus (strain ATCC 15356 / DSM 50701 / NCIMB 9529 / HD100).